We begin with the raw amino-acid sequence, 442 residues long: Trigger factor (442 aa).

The region spanning 165–250 (DDRVIIDFEG…LQKVMAPELP (86 aa)) is the PPIase FKBP-type domain.

This sequence belongs to the FKBP-type PPIase family. Tig subfamily.

The protein localises to the cytoplasm. The enzyme catalyses [protein]-peptidylproline (omega=180) = [protein]-peptidylproline (omega=0). In terms of biological role, involved in protein export. Acts as a chaperone by maintaining the newly synthesized protein in an open conformation. Functions as a peptidyl-prolyl cis-trans isomerase. This Coxiella burnetii (strain CbuK_Q154) (Coxiella burnetii (strain Q154)) protein is Trigger factor.